Consider the following 333-residue polypeptide: Fructose-1,6-bisphosphatase class 1 (333 aa).

The Mg(2+) site is built by Glu89, Asp110, Leu112, and Asp113. Substrate is bound by residues 113–116, Asn206, Tyr239, 257–259, and Lys269; these read DGSS and YLY. Glu275 provides a ligand contact to Mg(2+).

Belongs to the FBPase class 1 family. As to quaternary structure, homotetramer. Requires Mg(2+) as cofactor.

Its subcellular location is the cytoplasm. The catalysed reaction is beta-D-fructose 1,6-bisphosphate + H2O = beta-D-fructose 6-phosphate + phosphate. It functions in the pathway carbohydrate biosynthesis; gluconeogenesis. The chain is Fructose-1,6-bisphosphatase class 1 from Sodalis glossinidius (strain morsitans).